The chain runs to 277 residues: Large ribosomal subunit protein uL2 (277 aa).

Disordered stretches follow at residues 37-60 and 223-264; these read KNST…GHKH and VVMN…NKRT. Residues 39 to 49 show a composition bias toward polar residues; that stretch reads STAGRNNNGHI. The segment covering 50-60 has biased composition (basic residues); it reads TTRHKGGGHKH. The segment covering 229–244 has biased composition (basic and acidic residues); the sequence is DHPHGGGEGRTGEARE.

The protein belongs to the universal ribosomal protein uL2 family. In terms of assembly, part of the 50S ribosomal subunit. Forms a bridge to the 30S subunit in the 70S ribosome.

Its function is as follows. One of the primary rRNA binding proteins. Required for association of the 30S and 50S subunits to form the 70S ribosome, for tRNA binding and peptide bond formation. It has been suggested to have peptidyltransferase activity; this is somewhat controversial. Makes several contacts with the 16S rRNA in the 70S ribosome. The polypeptide is Large ribosomal subunit protein uL2 (Neisseria gonorrhoeae (strain ATCC 700825 / FA 1090)).